The following is a 415-amino-acid chain: Probable tRNA pseudouridine synthase D (415 aa).

D83 functions as the Nucleophile in the catalytic mechanism. The TRUD domain occupies 158-378 (GFPNYFGYQR…PGRRRELLIR (221 aa)).

This sequence belongs to the pseudouridine synthase TruD family.

It carries out the reaction uridine(13) in tRNA = pseudouridine(13) in tRNA. In terms of biological role, could be responsible for synthesis of pseudouridine from uracil-13 in transfer RNAs. This is Probable tRNA pseudouridine synthase D from Thermococcus gammatolerans (strain DSM 15229 / JCM 11827 / EJ3).